A 151-amino-acid chain; its full sequence is Abdominal ganglion neuropeptide L11 (151 aa).

The N-terminal stretch at 1–25 (MPCTPNSHRLLLVTALCLLITSLFA) is a signal peptide.

The protein resides in the secreted. This chain is Abdominal ganglion neuropeptide L11, found in Aplysia californica (California sea hare).